The primary structure comprises 60 residues: MADRVKVTLIKSTIGAVPKNKKTIEALGLTKLGKTVELPNNAATQGAVRKVAPYVKVEEV.

The protein belongs to the universal ribosomal protein uL30 family. In terms of assembly, part of the 50S ribosomal subunit.

This Agathobacter rectalis (strain ATCC 33656 / DSM 3377 / JCM 17463 / KCTC 5835 / VPI 0990) (Eubacterium rectale) protein is Large ribosomal subunit protein uL30.